Consider the following 262-residue polypeptide: tRNA pseudouridine synthase A (262 aa).

Residue aspartate 52 is the Nucleophile of the active site. Tyrosine 110 is a binding site for substrate.

It belongs to the tRNA pseudouridine synthase TruA family. Homodimer.

The catalysed reaction is uridine(38/39/40) in tRNA = pseudouridine(38/39/40) in tRNA. Its function is as follows. Formation of pseudouridine at positions 38, 39 and 40 in the anticodon stem and loop of transfer RNAs. The chain is tRNA pseudouridine synthase A from Hydrogenovibrio crunogenus (strain DSM 25203 / XCL-2) (Thiomicrospira crunogena).